Reading from the N-terminus, the 134-residue chain is Profilin-3 (134 aa).

Cys-13 and Cys-118 are disulfide-bonded. An Involved in PIP2 interaction motif is present at residues 84 to 100 (AVIRGKKGSGGITIKKT). Phosphothreonine is present on Thr-114.

This sequence belongs to the profilin family. Occurs in many kinds of cells as a complex with monomeric actin in a 1:1 ratio. Phosphorylated by MAP kinases.

The protein resides in the cytoplasm. The protein localises to the cytoskeleton. Functionally, binds to actin and affects the structure of the cytoskeleton. At high concentrations, profilin prevents the polymerization of actin, whereas it enhances it at low concentrations. This is Profilin-3 from Olea europaea (Common olive).